Here is a 103-residue protein sequence, read N- to C-terminus: Large ribosomal subunit protein uL24 (103 aa).

This sequence belongs to the universal ribosomal protein uL24 family. As to quaternary structure, part of the 50S ribosomal subunit.

One of two assembly initiator proteins, it binds directly to the 5'-end of the 23S rRNA, where it nucleates assembly of the 50S subunit. In terms of biological role, one of the proteins that surrounds the polypeptide exit tunnel on the outside of the subunit. The protein is Large ribosomal subunit protein uL24 of Agathobacter rectalis (strain ATCC 33656 / DSM 3377 / JCM 17463 / KCTC 5835 / VPI 0990) (Eubacterium rectale).